Here is a 69-residue protein sequence, read N- to C-terminus: Calcium-binding protein (69 aa).

EF-hand domains follow at residues 2 to 37 (VNRTEAAQLLKHLDRDKSGKISSQELMEFLHTVNCP) and 38 to 69 (FKKEQVEKFIKQHDKDGDGQLNTDELLDVLCS). Ca(2+) contacts are provided by Asp15, Asp17, Ser19, Lys21, Glu26, Asp51, Asp53, Asp55, Gln57, and Glu62.

The protein is Calcium-binding protein of Schistosoma mansoni (Blood fluke).